Reading from the N-terminus, the 354-residue chain is Peptide chain release factor 1 (354 aa).

Q233 is modified (N5-methylglutamine).

The protein belongs to the prokaryotic/mitochondrial release factor family. Methylated by PrmC. Methylation increases the termination efficiency of RF1.

It is found in the cytoplasm. Peptide chain release factor 1 directs the termination of translation in response to the peptide chain termination codons UAG and UAA. The protein is Peptide chain release factor 1 of Clostridioides difficile (strain 630) (Peptoclostridium difficile).